Here is a 317-residue protein sequence, read N- to C-terminus: U5 small nuclear ribonucleoprotein TSSC4 (317 aa).

A compositionally biased stretch (acidic residues) spans 1–19 (MAETEAGLEADEPTEDDTL). Residues 1–74 (MAETEAGLEA…PPTGTLTTAV (74 aa)) form a disordered region. A compositionally biased stretch (low complexity) spans 20–37 (PSDTVSLSDSDSDLSLPS). Serine 57, serine 64, serine 83, and serine 92 each carry phosphoserine. The segment at 74–101 (VQPFHLRGMSSTFSQRSHSIFDCLESAA) is hom2; mediates interaction with the U5 snRNP complexes and required for spliceosomal tri-snRNP complex assembly. The interval 101 to 152 (ARQAPCSAPQTSVSDNGSFRRPVTPPSQTPARGLSRVHGNTGPTRVLPVPDY) is disordered. Over residues 108 to 117 (APQTSVSDNG) the composition is skewed to polar residues. Phosphothreonine is present on threonine 124. Residues 146-300 (VLPVPDYVSH…SKKRSRDHFR (155 aa)) are interaction with SNRNP200. Residues 147-183 (LPVPDYVSHPERWTKYSLEDVSEASEQSNRDAALAFL) are hom3; mediates interaction with the U5 snRNP complexes. The interval 198–238 (FNQDPSSCGEGRVVFTKPVRDSEARAERKRVLKKGVGSGAG) is hom4; necessary for interaction with the PRPF19 complex and required for spliceosomal tri-snRNP complex assembly. Lysine 214 is subject to N6-acetyllysine. The segment at 216-317 (VRDSEARAER…GPGSERGPSV (102 aa)) is disordered. Positions 240–250 (EAAVELAHLAG) are enriched in low complexity.

It belongs to the TSSC4 family. In terms of assembly, interacts in a RNA-independent manner with distinct U5 snRNP-containing complexes, the mono-U5 snRNP and the post-splicing U5 snRNP-PRPF19 complex. Interacts with SNRNP200; the interaction is direct, excludes recruitment of C9ORF78 and WBP4 to SNRNP200 and negatively regulates its RNA helicase activity. Interacts with PRPF8; the interaction is direct. Expressed in placenta. Widely expressed in embryo and newborn.

The protein localises to the nucleus. It is found in the cytoplasm. Protein associated with the U5 snRNP, during its maturation and its post-splicing recycling and which is required for spliceosomal tri-snRNP complex assembly in the nucleus. Has a molecular sequestering activity and transiently hinders SNRNP200 binding sites for constitutive splicing factors that intervene later during the assembly of the spliceosome and splicing. Together with its molecular sequestering activity, may also function as a molecular adapter and placeholder, coordinating the assembly of the U5 snRNP and its association with the U4/U6 di-snRNP. This chain is U5 small nuclear ribonucleoprotein TSSC4, found in Mus musculus (Mouse).